The sequence spans 24 residues: Fraternine (24 aa).

The cysteines at positions 11 and 24 are disulfide-linked. C24 is modified (cysteine amide).

In terms of tissue distribution, expressed by the venom gland.

It localises to the secreted. Functionally, wasp venom peptide that acts as a potent mast cell degranulating peptide without hemolytic activity. Shows neuroprotective effect, since it prevents the death of dopaminergic neurons of the brain substantia nigra region and recovers motor deficit in a 6-hydroxydopamine (6-OHDA)-induced murine model of Parkinson disease. This Parachartergus fraternus (Artistic wasp) protein is Fraternine.